Consider the following 144-residue polypeptide: D-aminoacyl-tRNA deacylase (144 aa).

The Gly-cisPro motif, important for rejection of L-amino acids signature appears at 136–137 (GP).

It belongs to the DTD family. Homodimer.

The protein resides in the cytoplasm. It carries out the reaction glycyl-tRNA(Ala) + H2O = tRNA(Ala) + glycine + H(+). The enzyme catalyses a D-aminoacyl-tRNA + H2O = a tRNA + a D-alpha-amino acid + H(+). Functionally, an aminoacyl-tRNA editing enzyme that deacylates mischarged D-aminoacyl-tRNAs. Also deacylates mischarged glycyl-tRNA(Ala), protecting cells against glycine mischarging by AlaRS. Acts via tRNA-based rather than protein-based catalysis; rejects L-amino acids rather than detecting D-amino acids in the active site. By recycling D-aminoacyl-tRNA to D-amino acids and free tRNA molecules, this enzyme counteracts the toxicity associated with the formation of D-aminoacyl-tRNA entities in vivo and helps enforce protein L-homochirality. This is D-aminoacyl-tRNA deacylase from Aliivibrio salmonicida (strain LFI1238) (Vibrio salmonicida (strain LFI1238)).